We begin with the raw amino-acid sequence, 257 residues long: Imidazole glycerol phosphate synthase subunit HisF (257 aa).

Active-site residues include Asp12 and Asp131.

Belongs to the HisA/HisF family. In terms of assembly, heterodimer of HisH and HisF.

It is found in the cytoplasm. It carries out the reaction 5-[(5-phospho-1-deoxy-D-ribulos-1-ylimino)methylamino]-1-(5-phospho-beta-D-ribosyl)imidazole-4-carboxamide + L-glutamine = D-erythro-1-(imidazol-4-yl)glycerol 3-phosphate + 5-amino-1-(5-phospho-beta-D-ribosyl)imidazole-4-carboxamide + L-glutamate + H(+). The protein operates within amino-acid biosynthesis; L-histidine biosynthesis; L-histidine from 5-phospho-alpha-D-ribose 1-diphosphate: step 5/9. Functionally, IGPS catalyzes the conversion of PRFAR and glutamine to IGP, AICAR and glutamate. The HisF subunit catalyzes the cyclization activity that produces IGP and AICAR from PRFAR using the ammonia provided by the HisH subunit. The polypeptide is Imidazole glycerol phosphate synthase subunit HisF (Burkholderia mallei (strain NCTC 10247)).